Consider the following 213-residue polypeptide: Methylthioribulose-1-phosphate dehydratase (213 aa).

Positions 97 and 99 each coordinate Zn(2+).

It belongs to the aldolase class II family. MtnB subfamily. In terms of assembly, homotetramer. Zn(2+) serves as cofactor.

It catalyses the reaction 5-(methylsulfanyl)-D-ribulose 1-phosphate = 5-methylsulfanyl-2,3-dioxopentyl phosphate + H2O. The protein operates within amino-acid biosynthesis; L-methionine biosynthesis via salvage pathway; L-methionine from S-methyl-5-thio-alpha-D-ribose 1-phosphate: step 2/6. In terms of biological role, catalyzes the dehydration of methylthioribulose-1-phosphate (MTRu-1-P) into 2,3-diketo-5-methylthiopentyl-1-phosphate (DK-MTP-1-P). This chain is Methylthioribulose-1-phosphate dehydratase, found in Geobacillus sp. (strain WCH70).